The primary structure comprises 327 residues: ATP-dependent 6-phosphofructokinase (327 aa).

Residues glycine 12, 73-74, and 103-106 each bind ATP; these read RL and GDGS. Residue aspartate 104 coordinates Mg(2+). Residue 126–128 coordinates substrate; it reads TID. Aspartate 128 (proton acceptor) is an active-site residue. Arginine 155 serves as a coordination point for ADP. Substrate-binding positions include arginine 163 and 170 to 172; that span reads MGH. ADP contacts are provided by residues 186 to 188 and 214 to 216; these read GAD and KRS. Residues glutamate 223, arginine 245, and 251–254 contribute to the substrate site; that span reads HTQR.

It belongs to the phosphofructokinase type A (PFKA) family. ATP-dependent PFK group I subfamily. Prokaryotic clade 'B1' sub-subfamily. In terms of assembly, homotetramer. Requires Mg(2+) as cofactor.

Its subcellular location is the cytoplasm. The enzyme catalyses beta-D-fructose 6-phosphate + ATP = beta-D-fructose 1,6-bisphosphate + ADP + H(+). It functions in the pathway carbohydrate degradation; glycolysis; D-glyceraldehyde 3-phosphate and glycerone phosphate from D-glucose: step 3/4. Allosterically activated by ADP and other diphosphonucleosides, and allosterically inhibited by phosphoenolpyruvate. Catalyzes the phosphorylation of D-fructose 6-phosphate to fructose 1,6-bisphosphate by ATP, the first committing step of glycolysis. The sequence is that of ATP-dependent 6-phosphofructokinase from Spiroplasma citri.